Here is a 234-residue protein sequence, read N- to C-terminus: Large ribosomal subunit protein uL1c (234 aa).

It belongs to the universal ribosomal protein uL1 family. In terms of assembly, part of the 50S ribosomal subunit.

It localises to the plastid. It is found in the chloroplast. Functionally, binds directly to 23S rRNA. Might be involved in E site tRNA release (Potential). In Rhodomonas salina (Cryptomonas salina), this protein is Large ribosomal subunit protein uL1c (rpl1).